The sequence spans 444 residues: Amino-acid acetyltransferase (444 aa).

An N-acetyltransferase domain is found at 295–434 (EKVRRANIND…QALYNYQRRS (140 aa)).

This sequence belongs to the acetyltransferase family. ArgA subfamily. In terms of assembly, homohexamer.

The protein resides in the cytoplasm. The enzyme catalyses L-glutamate + acetyl-CoA = N-acetyl-L-glutamate + CoA + H(+). Its pathway is amino-acid biosynthesis; L-arginine biosynthesis; N(2)-acetyl-L-ornithine from L-glutamate: step 1/4. The sequence is that of Amino-acid acetyltransferase from Proteus mirabilis (strain HI4320).